The chain runs to 123 residues: Large ribosomal subunit protein uL18 (123 aa).

It belongs to the universal ribosomal protein uL18 family. Part of the 50S ribosomal subunit; part of the 5S rRNA/L5/L18/L25 subcomplex. Contacts the 5S and 23S rRNAs.

Its function is as follows. This is one of the proteins that bind and probably mediate the attachment of the 5S RNA into the large ribosomal subunit, where it forms part of the central protuberance. The protein is Large ribosomal subunit protein uL18 of Chlamydia felis (strain Fe/C-56) (Chlamydophila felis).